A 404-amino-acid polypeptide reads, in one-letter code: CinA-like protein (404 aa).

Belongs to the CinA family.

The polypeptide is CinA-like protein (Deinococcus radiodurans (strain ATCC 13939 / DSM 20539 / JCM 16871 / CCUG 27074 / LMG 4051 / NBRC 15346 / NCIMB 9279 / VKM B-1422 / R1)).